Reading from the N-terminus, the 54-residue chain is UPF0391 membrane protein Rmet_0093 (54 aa).

The next 2 membrane-spanning stretches (helical) occupy residues 5 to 25 and 30 to 50; these read ALVF…GIAA and IAKI…VMGL.

Belongs to the UPF0391 family.

It localises to the cell membrane. This is UPF0391 membrane protein Rmet_0093 from Cupriavidus metallidurans (strain ATCC 43123 / DSM 2839 / NBRC 102507 / CH34) (Ralstonia metallidurans).